A 434-amino-acid polypeptide reads, in one-letter code: Enolase (434 aa).

Glutamine 167 is a binding site for (2R)-2-phosphoglycerate. The active-site Proton donor is glutamate 209. Positions 246, 291, and 318 each coordinate Mg(2+). Positions 343, 372, 373, and 394 each coordinate (2R)-2-phosphoglycerate. Lysine 343 serves as the catalytic Proton acceptor.

This sequence belongs to the enolase family. As to quaternary structure, component of the RNA degradosome, a multiprotein complex involved in RNA processing and mRNA degradation. Requires Mg(2+) as cofactor.

It localises to the cytoplasm. The protein resides in the secreted. The protein localises to the cell surface. It catalyses the reaction (2R)-2-phosphoglycerate = phosphoenolpyruvate + H2O. The protein operates within carbohydrate degradation; glycolysis; pyruvate from D-glyceraldehyde 3-phosphate: step 4/5. Its function is as follows. Catalyzes the reversible conversion of 2-phosphoglycerate (2-PG) into phosphoenolpyruvate (PEP). It is essential for the degradation of carbohydrates via glycolysis. The polypeptide is Enolase (Buchnera aphidicola subsp. Acyrthosiphon pisum (strain APS) (Acyrthosiphon pisum symbiotic bacterium)).